The chain runs to 90 residues: Small ribosomal subunit protein bS16 (90 aa).

The protein belongs to the bacterial ribosomal protein bS16 family.

The sequence is that of Small ribosomal subunit protein bS16 from Anoxybacillus flavithermus (strain DSM 21510 / WK1).